A 598-amino-acid polypeptide reads, in one-letter code: Polypeptide N-acetylgalactosaminyltransferase 17 (598 aa).

Residues 1–6 are Cytoplasmic-facing; the sequence is MASLRR. The chain crosses the membrane as a helical; Signal-anchor for type II membrane protein span at residues 7-27; the sequence is VKVLLVLNLIAVAGFVIFLAK. The Lumenal portion of the chain corresponds to 28–598; it reads CRPIAVRSGD…QRWAIKNPIK (571 aa). Residue Asn-50 is glycosylated (N-linked (GlcNAc...) asparagine). Disulfide bonds link Cys-142/Cys-373 and Cys-364/Cys-443. Positions 151–262 are catalytic subdomain A; it reads LPQISIIFIF…AGWAEPVLSR (112 aa). Positions 192 and 223 each coordinate substrate. The Mn(2+) site is built by Asp-246, His-248, and His-378. The tract at residues 319 to 381 is catalytic subdomain B; that stretch reads PIRTPAMIGC…PCSRVAHIER (63 aa). Substrate is bound by residues Arg-381 and Tyr-386. Residues Asn-461 and Asn-486 are each glycosylated (N-linked (GlcNAc...) asparagine). Positions 465 to 594 constitute a Ricin B-type lectin domain; it reads AYGELRNNKA…SCTGQRWAIK (130 aa). Cystine bridges form between Cys-478–Cys-494, Cys-526–Cys-541, and Cys-568–Cys-586.

The protein belongs to the glycosyltransferase 2 family. GalNAc-T subfamily. It depends on Mn(2+) as a cofactor.

The protein resides in the golgi apparatus membrane. The catalysed reaction is L-seryl-[protein] + UDP-N-acetyl-alpha-D-galactosamine = a 3-O-[N-acetyl-alpha-D-galactosaminyl]-L-seryl-[protein] + UDP + H(+). The enzyme catalyses L-threonyl-[protein] + UDP-N-acetyl-alpha-D-galactosamine = a 3-O-[N-acetyl-alpha-D-galactosaminyl]-L-threonyl-[protein] + UDP + H(+). The protein operates within protein modification; protein glycosylation. May catalyze the initial reaction in O-linked oligosaccharide biosynthesis, the transfer of an N-acetyl-D-galactosamine residue to a serine or threonine residue on the protein receptor. In Mus musculus (Mouse), this protein is Polypeptide N-acetylgalactosaminyltransferase 17.